Reading from the N-terminus, the 395-residue chain is Probable G-protein coupled receptor npr-29 (395 aa).

The next 4 membrane-spanning stretches (helical) occupy residues 38 to 58, 66 to 86, 89 to 109, and 148 to 168; these read VVGF…LFAP, ILFY…AMLL, IELV…YLIF, and AIIQ…PVFA. N-linked (GlcNAc...) asparagine glycosylation occurs at Asn180. The next 3 membrane-spanning stretches (helical) occupy residues 202–222, 252–272, and 287–307; these read FWFN…GIIY, VITT…PYWV, and IIII…AYPL.

It belongs to the G-protein coupled receptor 1 family.

Its subcellular location is the cell membrane. Its function is as follows. Not known. Putative receptor. This chain is Probable G-protein coupled receptor npr-29, found in Caenorhabditis elegans.